The sequence spans 594 residues: Zinc finger protein 467 (594 aa).

The interval 1-70 (MRETLEALNS…HTEQAEAPCM (70 aa)) is disordered. Residue K97 forms a Glycyl lysine isopeptide (Lys-Gly) (interchain with G-Cter in SUMO2) linkage. C2H2-type zinc fingers lie at residues 160-182 (YGCE…QRLH), 188-210 (CACP…QRSH), 216-238 (FPCS…LRTH), 244-266 (YPCA…QKTH), 272-294 (FPCT…QRIH), 300-322 (YQCT…QRVH), 355-377 (FACS…QSLH), 430-452 (FFCP…RRVH), 458-480 (FACA…SRAH), 486-508 (FACA…QAVH), 514-536 (HACA…QAIH), and 542-564 (FSCP…QRIH). Positions 313–350 (QHLVRHQRVHDAASRTRSSPDIPATPHPPTASLAPSPT) are disordered. Residue K368 forms a Glycyl lysine isopeptide (Lys-Gly) (interchain with G-Cter in SUMO2) linkage.

Belongs to the krueppel C2H2-type zinc-finger protein family. Interacts with STAT3. Enhances STAT3 activity by keeping it in the nucleus.

It is found in the nucleus. Its function is as follows. Transcription factor that promotes adipocyte differentiation and suppresses osteoblast differentiation in the bone marrow. Enhances the osteoclast-supporting ability of stromal cells. Binds with STAT3 the consensus sequence 5'-CTTCTGGGAAGA-3' of the acute phase response element (APRE). Transactivates several promoters including FOS, OSM and PPARG. Recruits a histone deacetylase complex. In Rattus norvegicus (Rat), this protein is Zinc finger protein 467 (Znf467).